The sequence spans 441 residues: Zinc finger and BTB domain-containing protein 26 (441 aa).

In terms of domain architecture, BTB spans 33-97; it reads CDVTVLIDDI…CYSGVLEFPE (65 aa). The tract at residues 134 to 177 is disordered; it reads DSKEGCEPQSASPQSKEQQGDARGSPKQDSPCIHPSEDSMDMED. Lys-184 participates in a covalent cross-link: Glycyl lysine isopeptide (Lys-Gly) (interchain with G-Cter in SUMO2). Residues 194–216 form a disordered region; it reads VRSKKDQNQFISSEPTALHSSEP. Over residues 201–216 the composition is skewed to polar residues; that stretch reads NQFISSEPTALHSSEP. Residue Lys-255 forms a Glycyl lysine isopeptide (Lys-Gly) (interchain with G-Cter in SUMO2) linkage. 4 consecutive C2H2-type zinc fingers follow at residues 273-295, 298-320, 326-348, and 354-377; these read HQCP…LKMH, FMCL…MRVH, FQCK…LNLH, and HKCN…KQLH. A Glycyl lysine isopeptide (Lys-Gly) (interchain with G-Cter in SUMO2) cross-link involves residue Lys-329.

In terms of tissue distribution, ubiquitous.

The protein localises to the nucleus. In terms of biological role, may be involved in transcriptional regulation. This is Zinc finger and BTB domain-containing protein 26 (ZBTB26) from Homo sapiens (Human).